The chain runs to 105 residues: Synaptic plasticity regulator PANTS (105 aa).

This sequence belongs to the UPF0545 family. Interacts with RTN4 isoform A/Nogo-A; the interaction results in enhanced RTN4-mediated inhibition of AMPA receptor clustering. Also interacts with NCAM1, RANBP2 and CCT8. Post-translationally, rapidly degraded by proteolysis following neuronal stimulation, resulting in increased AMPA receptor clustering.

Its subcellular location is the synapse. It localises to the synaptic cleft. In terms of biological role, negatively regulates long-term potentiation and modulates adult synaptic plasticity. Stabilizes the interaction of RTN4 isoform A/Nogo-A with its receptors, inhibiting clustering of postsynaptic AMPA receptors at synaptic sites. Upon neuronal stimulation, degraded at synapses, reducing RTN4 signaling and allowing AMPA receptor clustering at individual synapses. This chain is Synaptic plasticity regulator PANTS, found in Pongo abelii (Sumatran orangutan).